Reading from the N-terminus, the 255-residue chain is Imidazole glycerol phosphate synthase subunit HisF (255 aa).

Catalysis depends on residues Asp-13 and Asp-132.

The protein belongs to the HisA/HisF family. As to quaternary structure, heterodimer of HisH and HisF.

The protein localises to the cytoplasm. The catalysed reaction is 5-[(5-phospho-1-deoxy-D-ribulos-1-ylimino)methylamino]-1-(5-phospho-beta-D-ribosyl)imidazole-4-carboxamide + L-glutamine = D-erythro-1-(imidazol-4-yl)glycerol 3-phosphate + 5-amino-1-(5-phospho-beta-D-ribosyl)imidazole-4-carboxamide + L-glutamate + H(+). The protein operates within amino-acid biosynthesis; L-histidine biosynthesis; L-histidine from 5-phospho-alpha-D-ribose 1-diphosphate: step 5/9. Its function is as follows. IGPS catalyzes the conversion of PRFAR and glutamine to IGP, AICAR and glutamate. The HisF subunit catalyzes the cyclization activity that produces IGP and AICAR from PRFAR using the ammonia provided by the HisH subunit. In Leptospira biflexa serovar Patoc (strain Patoc 1 / ATCC 23582 / Paris), this protein is Imidazole glycerol phosphate synthase subunit HisF.